The primary structure comprises 475 residues: ATP synthase subunit beta (475 aa).

155–162 (GGAGVGKT) contributes to the ATP binding site.

The protein belongs to the ATPase alpha/beta chains family. As to quaternary structure, F-type ATPases have 2 components, CF(1) - the catalytic core - and CF(0) - the membrane proton channel. CF(1) has five subunits: alpha(3), beta(3), gamma(1), delta(1), epsilon(1). CF(0) has three main subunits: a(1), b(2) and c(9-12). The alpha and beta chains form an alternating ring which encloses part of the gamma chain. CF(1) is attached to CF(0) by a central stalk formed by the gamma and epsilon chains, while a peripheral stalk is formed by the delta and b chains.

The protein resides in the cell inner membrane. It catalyses the reaction ATP + H2O + 4 H(+)(in) = ADP + phosphate + 5 H(+)(out). Produces ATP from ADP in the presence of a proton gradient across the membrane. The catalytic sites are hosted primarily by the beta subunits. The sequence is that of ATP synthase subunit beta from Rhizobium etli (strain CIAT 652).